A 101-amino-acid polypeptide reads, in one-letter code: Small ribosomal subunit protein uS14 (101 aa).

The protein belongs to the universal ribosomal protein uS14 family. As to quaternary structure, part of the 30S ribosomal subunit. Contacts proteins S3 and S10.

Its function is as follows. Binds 16S rRNA, required for the assembly of 30S particles and may also be responsible for determining the conformation of the 16S rRNA at the A site. In Anaplasma phagocytophilum (strain HZ), this protein is Small ribosomal subunit protein uS14.